A 510-amino-acid chain; its full sequence is NAD(P)H-quinone oxidoreductase subunit 2 B, chloroplastic (510 aa).

A run of 13 helical transmembrane segments spans residues L24–L44, I57–F77, I99–I119, M124–C144, L149–Y169, Y183–G203, P227–A247, W295–I315, M323–D343, Y354–L374, A395–F415, L418–L438, and L482–I502.

Belongs to the complex I subunit 2 family. In terms of assembly, NDH is composed of at least 16 different subunits, 5 of which are encoded in the nucleus.

Its subcellular location is the plastid. It localises to the chloroplast thylakoid membrane. It carries out the reaction a plastoquinone + NADH + (n+1) H(+)(in) = a plastoquinol + NAD(+) + n H(+)(out). The catalysed reaction is a plastoquinone + NADPH + (n+1) H(+)(in) = a plastoquinol + NADP(+) + n H(+)(out). Functionally, NDH shuttles electrons from NAD(P)H:plastoquinone, via FMN and iron-sulfur (Fe-S) centers, to quinones in the photosynthetic chain and possibly in a chloroplast respiratory chain. The immediate electron acceptor for the enzyme in this species is believed to be plastoquinone. Couples the redox reaction to proton translocation, and thus conserves the redox energy in a proton gradient. In Lotus japonicus (Lotus corniculatus var. japonicus), this protein is NAD(P)H-quinone oxidoreductase subunit 2 B, chloroplastic.